Here is a 478-residue protein sequence, read N- to C-terminus: Protein nucleotidyltransferase YdiU (478 aa).

Residues G84, G86, R87, K107, D119, G120, R170, and R177 each contribute to the ATP site. Catalysis depends on D246, which acts as the Proton acceptor. Residues N247 and D256 each coordinate Mg(2+). Position 256 (D256) interacts with ATP.

The protein belongs to the SELO family. Mg(2+) is required as a cofactor. The cofactor is Mn(2+).

It catalyses the reaction L-seryl-[protein] + ATP = 3-O-(5'-adenylyl)-L-seryl-[protein] + diphosphate. The enzyme catalyses L-threonyl-[protein] + ATP = 3-O-(5'-adenylyl)-L-threonyl-[protein] + diphosphate. The catalysed reaction is L-tyrosyl-[protein] + ATP = O-(5'-adenylyl)-L-tyrosyl-[protein] + diphosphate. It carries out the reaction L-histidyl-[protein] + UTP = N(tele)-(5'-uridylyl)-L-histidyl-[protein] + diphosphate. It catalyses the reaction L-seryl-[protein] + UTP = O-(5'-uridylyl)-L-seryl-[protein] + diphosphate. The enzyme catalyses L-tyrosyl-[protein] + UTP = O-(5'-uridylyl)-L-tyrosyl-[protein] + diphosphate. Its function is as follows. Nucleotidyltransferase involved in the post-translational modification of proteins. It can catalyze the addition of adenosine monophosphate (AMP) or uridine monophosphate (UMP) to a protein, resulting in modifications known as AMPylation and UMPylation. The chain is Protein nucleotidyltransferase YdiU from Escherichia coli O127:H6 (strain E2348/69 / EPEC).